The sequence spans 536 residues: Keratin, type II cytoskeletal 4 (536 aa).

The tract at residues methionine 1–alanine 145 is head. Position 13 is an omega-N-methylarginine (arginine 13). The interval glutamate 146–leucine 181 is coil 1A. The IF rod domain maps to glutamate 146–methionine 457. Residues glutamine 182–tyrosine 200 form a linker 1 region. The coil 1B stretch occupies residues isoleucine 201–glutamine 293. The segment at threonine 294–isoleucine 316 is linker 12. The interval isoleucine 317 to glutamate 454 is coil 2. The tail stretch occupies residues cysteine 455–serine 524. The segment at threonine 515 to proline 536 is disordered. Positions threonine 527–proline 536 are enriched in basic and acidic residues.

It belongs to the intermediate filament family. In terms of assembly, heterotetramer of two type I and two type II keratins. keratin-4 is generally associated with keratin-13.

This Rattus norvegicus (Rat) protein is Keratin, type II cytoskeletal 4.